Here is an 879-residue protein sequence, read N- to C-terminus: MKKRTKYRYWLNSLAFFGCGVSVGAFFTLFLMGTQSDVSPLFVKNINIQLPSSTHQQKIEPLNLPTNISKTEIASWGSEFQSKVLDFYARDGEEHDNKIRYQLPSLSFAWTGGKELVSDFARLHGARNFVAYFDQYWRFWSNPNWPAGQVDRVDVLCEWNSDKQTISDINFSDQFVFASARFEGKIANFGFAGQTMKDINESFQERVLSIYKPRTLVYLTSQADAERVDYYEEFVNNLTALIKKQVGEKAEKDNFFILQLHWKTNDSAFNEKLSVLNFVALATVKQLTDQNRNFASKIKVVDHFEGDFVPSDWLSGNYLSEDKVSLSLQGEFAIGKQLAQVLKATGAEPLPVEVTEPSLEAIPINEETQFDVKNYYSFGHYHDTNVINDRIDFDDPNYNLETDFFNNAKANLVTTSNPFTVTWKTKTKELEIESTEVNPNGLQYQLSFASDFNARDIKKRPTSYLRWNGTITNKQIDISLYWKYIHKALDIKENEPLNYLLQITRTDGQGSYQVINGWINKEKDNTPTIFDFLKDKTQANWLFIGDSMTHGVGTDGYSSAPQLLEQSLKNDFGRYRDVVINSAINGSNTSLELYMQNHRFKQYKNIDVYVLNLGTNDINQLAQGVYTVEQYKHNLTQILDLLHTQSPQAHVVLANIAPSSLLRSSEKNWKTFNDFLEGIPKDSNYSSFVHLLDQKSLFLQLAKVSGIDINENKLFNTDFLKKSFYFADKFSHLSVNGNVEYMRNILTTVGFDWQNSAFASLGYLSFGYLKKPATVVELPEVTVDDQTGVLDIKQSVPPKLKVNKQGFEPVFITFTNTNNNEQVTVVLNNWSQWETHKTDFAPWLKCKHWNIDVKQIRRVKTTFRDQENANFFELIESKQ.

A helical membrane pass occupies residues 14 to 34 (LAFFGCGVSVGAFFTLFLMGT).

It is found in the membrane. This is an uncharacterized protein from Mycoplasma pneumoniae (strain ATCC 29342 / M129 / Subtype 1) (Mycoplasmoides pneumoniae).